Here is a 475-residue protein sequence, read N- to C-terminus: Probable L-cysteine desulfhydrase, chloroplastic (475 aa).

A chloroplast-targeting transit peptide spans 1-24; sequence MASSLSPPEEASYHHRHTKRYTSS. Residues 1–40 form a disordered region; sequence MASSLSPPEEASYHHRHTKRYTSSASSASSTTNGTVESSV. The segment covering 22–32 has biased composition (low complexity); sequence TSSASSASSTT. Residue K284 is modified to N6-(pyridoxal phosphate)lysine.

Belongs to the class-V pyridoxal-phosphate-dependent aminotransferase family. As to quaternary structure, interacts in vitro with QS.

Its subcellular location is the plastid. The protein resides in the chloroplast. May catalyze the production of hydrogen sulfide (H2S) from cysteine. This chain is Probable L-cysteine desulfhydrase, chloroplastic, found in Arabidopsis thaliana (Mouse-ear cress).